The following is a 430-amino-acid chain: Serine--tRNA ligase (430 aa).

An L-serine-binding site is contributed by 237 to 239 (TAE). Residue 268–270 (RSE) coordinates ATP. Residue E291 participates in L-serine binding. 355 to 358 (EISS) is an ATP binding site. Residue S391 participates in L-serine binding.

It belongs to the class-II aminoacyl-tRNA synthetase family. Type-1 seryl-tRNA synthetase subfamily. As to quaternary structure, homodimer. The tRNA molecule binds across the dimer.

The protein resides in the cytoplasm. It catalyses the reaction tRNA(Ser) + L-serine + ATP = L-seryl-tRNA(Ser) + AMP + diphosphate + H(+). The enzyme catalyses tRNA(Sec) + L-serine + ATP = L-seryl-tRNA(Sec) + AMP + diphosphate + H(+). It participates in aminoacyl-tRNA biosynthesis; selenocysteinyl-tRNA(Sec) biosynthesis; L-seryl-tRNA(Sec) from L-serine and tRNA(Sec): step 1/1. In terms of biological role, catalyzes the attachment of serine to tRNA(Ser). Is also able to aminoacylate tRNA(Sec) with serine, to form the misacylated tRNA L-seryl-tRNA(Sec), which will be further converted into selenocysteinyl-tRNA(Sec). The polypeptide is Serine--tRNA ligase (Enterobacter sp. (strain 638)).